A 105-amino-acid polypeptide reads, in one-letter code: Phosphoribosyl-ATP pyrophosphatase (105 aa).

This sequence belongs to the PRA-PH family.

The protein localises to the cytoplasm. The enzyme catalyses 1-(5-phospho-beta-D-ribosyl)-ATP + H2O = 1-(5-phospho-beta-D-ribosyl)-5'-AMP + diphosphate + H(+). It participates in amino-acid biosynthesis; L-histidine biosynthesis; L-histidine from 5-phospho-alpha-D-ribose 1-diphosphate: step 2/9. In Vesicomyosocius okutanii subsp. Calyptogena okutanii (strain HA), this protein is Phosphoribosyl-ATP pyrophosphatase.